The following is a 358-amino-acid chain: UDP-N-acetylglucosamine--N-acetylmuramyl-(pentapeptide) pyrophosphoryl-undecaprenol N-acetylglucosamine transferase (358 aa).

UDP-N-acetyl-alpha-D-glucosamine-binding residues include R166, S196, and Q291.

Belongs to the glycosyltransferase 28 family. MurG subfamily.

Its subcellular location is the cell membrane. It catalyses the reaction Mur2Ac(oyl-L-Ala-gamma-D-Glu-L-Lys-D-Ala-D-Ala)-di-trans,octa-cis-undecaprenyl diphosphate + UDP-N-acetyl-alpha-D-glucosamine = beta-D-GlcNAc-(1-&gt;4)-Mur2Ac(oyl-L-Ala-gamma-D-Glu-L-Lys-D-Ala-D-Ala)-di-trans,octa-cis-undecaprenyl diphosphate + UDP + H(+). It functions in the pathway cell wall biogenesis; peptidoglycan biosynthesis. In terms of biological role, cell wall formation. Catalyzes the transfer of a GlcNAc subunit on undecaprenyl-pyrophosphoryl-MurNAc-pentapeptide (lipid intermediate I) to form undecaprenyl-pyrophosphoryl-MurNAc-(pentapeptide)GlcNAc (lipid intermediate II). The protein is UDP-N-acetylglucosamine--N-acetylmuramyl-(pentapeptide) pyrophosphoryl-undecaprenol N-acetylglucosamine transferase of Staphylococcus saprophyticus subsp. saprophyticus (strain ATCC 15305 / DSM 20229 / NCIMB 8711 / NCTC 7292 / S-41).